The chain runs to 90 residues: MVLSRLNPIVKQCVLGNRPNLVSLGPVRTAVYSKSGGLLPEPHRTSFGIIRLILTVVPGLLIGAAISKNIANFLEENDLFVPSDDDDDDD.

Over Met1 to Gly48 the chain is Mitochondrial matrix. A helical transmembrane segment spans residues Ile49–Glu76. The Mitochondrial intermembrane portion of the chain corresponds to Asn77–Asp90.

It belongs to the SMDT1/EMRE family. As to quaternary structure, component of the uniplex complex, composed of MCU, EMRE, MICU1 and MICU2 in a 4:4:1:1 stoichiometry.

Its subcellular location is the mitochondrion inner membrane. Essential regulatory subunit of the mitochondrial calcium uniporter complex (uniplex), a complex that mediates calcium uptake into mitochondria. Required to bridge the calcium-sensing proteins MICU1 with the calcium-conducting subunit MCU. Acts by mediating activation of MCU and retention of MICU1 to the MCU pore, in order to ensure tight regulation of the uniplex complex and appropriate responses to intracellular calcium signaling. The protein is Essential MCU regulator, mitochondrial (EMRE) of Tribolium castaneum (Red flour beetle).